The sequence spans 1040 residues: Protocadherin-10 (1040 aa).

The first 18 residues, 1–18 (MIVLLLFALLWMVEGVFS), serve as a signal peptide directing secretion. 6 Cadherin domains span residues 19 to 122 (QLHY…PPSF), 123 to 250 (PEPD…VPAF), 251 to 358 (DQPV…APEI), 359 to 463 (SFST…APRF), 464 to 574 (SQPV…APAI), and 582 to 690 (NGTP…GGGG). The Extracellular portion of the chain corresponds to 19–715 (QLHYTVQEEQ…GGGETSLDLT (697 aa)). Over residues 207 to 223 (GGGGGVGEGGGGGGGAG) the composition is skewed to gly residues. A disordered region spans residues 207–228 (GGGGGVGEGGGGGGGAGLPPQQ). N273 is a glycosylation site (N-linked (GlcNAc...) asparagine). The N-linked (GlcNAc...) asparagine glycan is linked to N557. Gly residues predominate over residues 686–697 (QGGGGSGGGGSG). Residues 686 to 708 (QGGGGSGGGGSGEHQRPSRSGGG) form a disordered region. Residues 716 to 736 (LILIIALGSVSFIFLLAMIVL) traverse the membrane as a helical segment. Topologically, residues 737–1040 (AVRCQKEKKL…PPYLTRKRIC (304 aa)) are cytoplasmic. A disordered region spans residues 899–927 (AFQEADIVSSKDSGHGDSEQGDSDHDATN). The span at 910–926 (DSGHGDSEQGDSDHDAT) shows a compositional bias: basic and acidic residues.

Moderately expressed in all regions of the brain examined, as well as in testis and ovary, and low expression in all other tissues tested.

The protein resides in the cell membrane. Its function is as follows. Potential calcium-dependent cell-adhesion protein. Functionally, (Microbial infection) Acts as a receptor for Western equine encephalitis virus. The chain is Protocadherin-10 (PCDH10) from Homo sapiens (Human).